The primary structure comprises 1031 residues: Error-prone DNA polymerase (1031 aa).

The protein belongs to the DNA polymerase type-C family. DnaE2 subfamily.

Its subcellular location is the cytoplasm. The catalysed reaction is DNA(n) + a 2'-deoxyribonucleoside 5'-triphosphate = DNA(n+1) + diphosphate. DNA polymerase involved in damage-induced mutagenesis and translesion synthesis (TLS). It is not the major replicative DNA polymerase. The sequence is that of Error-prone DNA polymerase from Pseudomonas syringae pv. tomato (strain ATCC BAA-871 / DC3000).